A 355-amino-acid chain; its full sequence is Heat-inducible transcription repressor HrcA (355 aa).

Belongs to the HrcA family.

Functionally, negative regulator of class I heat shock genes (grpE-dnaK-dnaJ and groELS operons). Prevents heat-shock induction of these operons. This chain is Heat-inducible transcription repressor HrcA, found in Nitratidesulfovibrio vulgaris (strain ATCC 29579 / DSM 644 / CCUG 34227 / NCIMB 8303 / VKM B-1760 / Hildenborough) (Desulfovibrio vulgaris).